Here is an 89-residue protein sequence, read N- to C-terminus: Large ribosomal subunit protein bL31B (89 aa).

It belongs to the bacterial ribosomal protein bL31 family. Type B subfamily. As to quaternary structure, part of the 50S ribosomal subunit.

This Corynebacterium urealyticum (strain ATCC 43042 / DSM 7109) protein is Large ribosomal subunit protein bL31B.